A 271-amino-acid polypeptide reads, in one-letter code: Urease accessory protein UreD (271 aa).

It belongs to the UreD family. UreD, UreF and UreG form a complex that acts as a GTP-hydrolysis-dependent molecular chaperone, activating the urease apoprotein by helping to assemble the nickel containing metallocenter of UreC. The UreE protein probably delivers the nickel.

The protein localises to the cytoplasm. Functionally, required for maturation of urease via the functional incorporation of the urease nickel metallocenter. The polypeptide is Urease accessory protein UreD (Haemophilus influenzae (strain 86-028NP)).